A 286-amino-acid polypeptide reads, in one-letter code: ATP synthase gamma chain (286 aa).

It belongs to the ATPase gamma chain family. F-type ATPases have 2 components, CF(1) - the catalytic core - and CF(0) - the membrane proton channel. CF(1) has five subunits: alpha(3), beta(3), gamma(1), delta(1), epsilon(1). CF(0) has three main subunits: a, b and c.

It is found in the cell inner membrane. Produces ATP from ADP in the presence of a proton gradient across the membrane. The gamma chain is believed to be important in regulating ATPase activity and the flow of protons through the CF(0) complex. This is ATP synthase gamma chain from Pseudoalteromonas translucida (strain TAC 125).